The following is a 271-amino-acid chain: MLGLKEKICLYGFNNLTKTLSFNIYDICYAKTEREKEDYIKYIDEQYNSERLTKILCDVTEMIGAHVLNISKQDYEPQGASVNVLITEEALPVALIDPSCNKGELSYLELRDSVVGHLDKSHLTVHTYPEFHPNNDIISFRVDIDVSTCGKISPLNALDYLIGSFDSDVITIDYRVRGFTRDVDGRKCYIDHDIKSIQDYIDEETLKKYDAMDVNVYQSNIFHTKMMLKDIGLNNYLFNSDPYELSPNDRREIRDRISKEMIEIYGGVNIY.

Residue Ser121 is the Schiff-base intermediate with substrate; via pyruvic acid of the active site. At Ser121 the chain carries Pyruvic acid (Ser); by autocatalysis. His126 serves as the catalytic Proton acceptor; for processing activity. The active-site Proton donor; for catalytic activity is Cys149.

It belongs to the prokaryotic AdoMetDC family. Type 2 subfamily. As to quaternary structure, heterooctamer of four alpha and four beta chains arranged as a tetramer of alpha/beta heterodimers. It depends on pyruvate as a cofactor. Post-translationally, is synthesized initially as an inactive proenzyme. Formation of the active enzyme involves a self-maturation process in which the active site pyruvoyl group is generated from an internal serine residue via an autocatalytic post-translational modification. Two non-identical subunits are generated from the proenzyme in this reaction, and the pyruvate is formed at the N-terminus of the alpha chain, which is derived from the carboxyl end of the proenzyme. The post-translation cleavage follows an unusual pathway, termed non-hydrolytic serinolysis, in which the side chain hydroxyl group of the serine supplies its oxygen atom to form the C-terminus of the beta chain, while the remainder of the serine residue undergoes an oxidative deamination to produce ammonia and the pyruvoyl group blocking the N-terminus of the alpha chain.

It carries out the reaction S-adenosyl-L-methionine + H(+) = S-adenosyl 3-(methylsulfanyl)propylamine + CO2. It functions in the pathway amine and polyamine biosynthesis; S-adenosylmethioninamine biosynthesis; S-adenosylmethioninamine from S-adenosyl-L-methionine: step 1/1. In terms of biological role, catalyzes the decarboxylation of S-adenosylmethionine to S-adenosylmethioninamine (dcAdoMet), the propylamine donor required for the synthesis of the polyamines spermine and spermidine from the diamine putrescine. In Clostridium perfringens (strain SM101 / Type A), this protein is S-adenosylmethionine decarboxylase proenzyme.